The following is a 255-amino-acid chain: 5'-nucleotidase SurE (255 aa).

4 residues coordinate a divalent metal cation: Asp-8, Asp-9, Ser-39, and Asn-91.

Belongs to the SurE nucleotidase family. A divalent metal cation is required as a cofactor.

Its subcellular location is the cytoplasm. The catalysed reaction is a ribonucleoside 5'-phosphate + H2O = a ribonucleoside + phosphate. Functionally, nucleotidase that shows phosphatase activity on nucleoside 5'-monophosphates. The protein is 5'-nucleotidase SurE of Nitrosospira multiformis (strain ATCC 25196 / NCIMB 11849 / C 71).